The chain runs to 220 residues: Orotate phosphoribosyltransferase (220 aa).

Lys-26 contacts 5-phospho-alpha-D-ribose 1-diphosphate. Residue 34–35 participates in orotate binding; it reads FF. 5-phospho-alpha-D-ribose 1-diphosphate-binding positions include 72–73, Arg-99, Lys-100, Lys-103, His-105, and 125–133; these read YK and DDVISAGTS. Orotate contacts are provided by Ser-129 and Arg-157.

It belongs to the purine/pyrimidine phosphoribosyltransferase family. PyrE subfamily. As to quaternary structure, homodimer. It depends on Mg(2+) as a cofactor.

The catalysed reaction is orotidine 5'-phosphate + diphosphate = orotate + 5-phospho-alpha-D-ribose 1-diphosphate. Its pathway is pyrimidine metabolism; UMP biosynthesis via de novo pathway; UMP from orotate: step 1/2. Catalyzes the transfer of a ribosyl phosphate group from 5-phosphoribose 1-diphosphate to orotate, leading to the formation of orotidine monophosphate (OMP). In Nitrosococcus oceani (strain ATCC 19707 / BCRC 17464 / JCM 30415 / NCIMB 11848 / C-107), this protein is Orotate phosphoribosyltransferase.